Here is a 138-residue protein sequence, read N- to C-terminus: Protein transport protein got1 homolog (138 aa).

The Cytoplasmic segment spans residues 1-7; it reads MFTDQQK. A helical membrane pass occupies residues 8-28; it reads IGAMLSAMGLFFGFLGVLLFL. Residues 29 to 30 lie on the Lumenal side of the membrane; sequence DR. Residues 31 to 51 traverse the membrane as a helical segment; sequence NLLALGNLLLVSGIVLILGLQ. Over 52-62 the chain is Cytoplasmic; that stretch reads KTTKFFAQKKK. A helical transmembrane segment spans residues 63–82; sequence IKGTILFFFGIVVLLVTRWT. Over 83 to 87 the chain is Lumenal; the sequence is FVGMV. A helical transmembrane segment spans residues 88–108; the sequence is IEIFGFVNLFGDAFPIVISIL. The Cytoplasmic segment spans residues 109–138; sequence RKLPIIGNILNHPLVNRLLQKADSGNELPF.

Belongs to the GOT1 family.

Its subcellular location is the golgi apparatus membrane. In terms of biological role, may be involved in fusion of ER-derived transport vesicles with the Golgi complex. The sequence is that of Protein transport protein got1 homolog (golt1) from Dictyostelium discoideum (Social amoeba).